The primary structure comprises 608 residues: Developmental regulatory protein wetA (608 aa).

Disordered regions lie at residues 54 to 88 (ADHHGHNPGMPTLADGLMLDHPSESTASASSGVST), 102 to 125 (VDATVPSQPGSSAAPGASHDVDPR), 146 to 186 (VSMS…MTRK), 202 to 226 (SKLRKPRKPIAMDRPGSPTMDNPPR), 309 to 352 (WPHQ…HAVP), 447 to 544 (AQTY…GDIG), and 556 to 576 (LMTGVAPSGSSKTKARREREA). 3 stretches are compositionally biased toward low complexity: residues 77-88 (ESTASASSGVST), 107-119 (PSQPGSSAAPGAS), and 163-175 (SSPGRRVPVSQPS). Residues 313–338 (QHPHPHPHPHHPQAHTHPHPHPHPHP) are compositionally biased toward basic residues. Composition is skewed to low complexity over residues 339–350 (HQQAVAGHPQHA) and 502–517 (SSNGSVASARSASGRG).

Belongs to the wetA family.

AbaA and wetA are pivotal regulators of conidiophore development and conidium maturation. They act individually and together to regulate their own expression and that of numerous other sporulation-specific genes. Functions to maintain conidial dormancy by suppressing microcycle conidiation. The protein is Developmental regulatory protein wetA of Gibberella zeae (strain ATCC MYA-4620 / CBS 123657 / FGSC 9075 / NRRL 31084 / PH-1) (Wheat head blight fungus).